The chain runs to 800 residues: Fibroblast growth factor receptor 4 (800 aa).

The N-terminal stretch at 1-16 (MWLLLALLSIFQETPA) is a signal peptide. Ig-like C2-type domains are found at residues 17 to 115 (FSLE…LIMD), 148 to 236 (PQRM…YLLD), and 245 to 345 (PILQ…AWLT). Over 17–367 (FSLEASEEME…TATSEARYTD (351 aa)) the chain is Extracellular. An intrachain disulfide couples C54 to C98. N109 carries N-linked (GlcNAc...) asparagine glycosylation. An intrachain disulfide couples C168 to C220. 3 N-linked (GlcNAc...) asparagine glycosylation sites follow: N254, N286, and N307. A disulfide bridge connects residues C267 and C329. A helical membrane pass occupies residues 368-388 (IILYVSGSLALVLLLLLAGVY). The Cytoplasmic portion of the chain corresponds to 389–800 (HRQAIHGHHS…PFPFPEAQTT (412 aa)). A Protein kinase domain is found at 465–753 (LVLGKPLGEG…VLLAVSEEYL (289 aa)). Residues 471–479 (LGEGCFGQV) and K501 each bind ATP. S571 is modified (phosphoserine). The active-site Proton acceptor is D610. 3 positions are modified to phosphotyrosine; by autocatalysis: Y640, Y641, and Y752. The interval 768–800 (DASSTCSSSDSVFSHDPLPLEPSPFPFPEAQTT) is disordered. Residues 770–781 (SSTCSSSDSVFS) show a composition bias toward low complexity.

The protein belongs to the protein kinase superfamily. Tyr protein kinase family. Fibroblast growth factor receptor subfamily. In terms of assembly, monomer. Homodimer after ligand binding. Interacts with FGF1, FGF2, FGF4, FGF6, FGF8, FGF9, FGF16, FGF17, FGF18, FGF19, FGF21 and FGF23 (in vitro). Binding affinity for FGF family members is enhanced by interactions between FGFs and heparan sulfate proteoglycans. Interacts with KLB; this strongly increases the affinity for FGF19 and FGF23. Affinity for FGF19 is strongly increased by KLB and sulfated glycosaminoglycans. KLB and KL both interact with the core-glycosylated FGFR4 in the endoplasmic reticulum and promote its degradation, so that only FGFR4 with fully mature N-glycans is expressed at the cell surface. Identified in a complex with NCAM1, CDH2, PLCG1, FRS2, SRC, SHC1, GAP43 and CTTN. Interacts with MMP14 and HIP1. Interacts with STAT3. Post-translationally, N-glycosylated. Full maturation of the glycan chains in the Golgi is essential for high affinity interaction with FGF19. Ubiquitinated. Subject to proteasomal degradation when not fully glycosylated. In terms of processing, autophosphorylated. Binding of FGF family members together with heparan sulfate proteoglycan or heparin promotes receptor dimerization and autophosphorylation on tyrosine residues. Autophosphorylation occurs in trans between the two FGFR molecules present in the dimer.

It is found in the cell membrane. Its subcellular location is the endosome. It localises to the endoplasmic reticulum. The catalysed reaction is L-tyrosyl-[protein] + ATP = O-phospho-L-tyrosyl-[protein] + ADP + H(+). With respect to regulation, present in an inactive conformation in the absence of bound ligand. Ligand binding leads to dimerization and activation by autophosphorylation on tyrosine residues. Functionally, tyrosine-protein kinase that acts as a cell-surface receptor for fibroblast growth factors and plays a role in the regulation of cell proliferation, differentiation and migration, and in regulation of lipid metabolism, bile acid biosynthesis, glucose uptake, vitamin D metabolism and phosphate homeostasis. Required for normal down-regulation of the expression of CYP7A1, the rate-limiting enzyme in bile acid synthesis, in response to FGF19. Phosphorylates PLCG1 and FRS2. Ligand binding leads to the activation of several signaling cascades. Activation of PLCG1 leads to the production of the cellular signaling molecules diacylglycerol and inositol 1,4,5-trisphosphate. Phosphorylation of FRS2 triggers recruitment of GRB2, GAB1, PIK3R1 and SOS1, and mediates activation of RAS, MAPK1/ERK2, MAPK3/ERK1 and the MAP kinase signaling pathway, as well as of the AKT1 signaling pathway. Promotes SRC-dependent phosphorylation of the matrix protease MMP14 and its lysosomal degradation. FGFR4 signaling is down-regulated by receptor internalization and degradation; MMP14 promotes internalization and degradation of FGFR4. This is Fibroblast growth factor receptor 4 (Fgfr4) from Rattus norvegicus (Rat).